A 163-amino-acid chain; its full sequence is MAFDFARATKYFLMWDFIKGFGLGMRYFVSPKPTLNYPHEKGPLSPRFRGEHALRRYPNGEERCIACKLCEAVCPAQAITIDAEPREDGSRRTTRYDIDMTKCIYCGFCQEACPVDAIVEGPNFEYATETREELFYDKQKLLANGERWEAEIARNLQLDAPYR.

2 consecutive 4Fe-4S ferredoxin-type domains span residues leucine 54–glutamate 84 and threonine 94–asparagine 123. 8 residues coordinate [4Fe-4S] cluster: cysteine 64, cysteine 67, cysteine 70, cysteine 74, cysteine 103, cysteine 106, cysteine 109, and cysteine 113.

The protein belongs to the complex I 23 kDa subunit family. NDH-1 is composed of at least 14 different subunits, Nqo1 to Nqo14. The complex has a L-shaped structure, with the hydrophobic arm (subunits Nqo7, Nqo8, Nqo10 to Nqo14) embedded in the inner membrane and the hydrophilic peripheral arm (subunits Nqo1 to Nqo6, Nqo9) protruding into the bacterial cytoplasm. The hydrophilic domain contains all the redox centers. NADH-quinone oxidoreductase forms a supercomplex with ubiquinol-cytochrome c reductase complex (complex III or cytochrome b-c1 complex) and cytochrome c oxidase (complex IV), which stabilizes the NADH-quinone oxidoreductase complex. Requires [4Fe-4S] cluster as cofactor.

It is found in the cell inner membrane. The enzyme catalyses a quinone + NADH + 5 H(+)(in) = a quinol + NAD(+) + 4 H(+)(out). Functionally, NDH-1 shuttles electrons from NADH, via FMN and iron-sulfur (Fe-S) centers, to quinones in the respiratory chain. The immediate electron acceptor for the enzyme in this species is believed to be ubiquinone. Couples the redox reaction to proton translocation (for every two electrons transferred, four hydrogen ions are translocated across the cytoplasmic membrane), and thus conserves the redox energy in a proton gradient. The polypeptide is NADH-quinone oxidoreductase subunit I (Paracoccus denitrificans (strain Pd 1222)).